Consider the following 497-residue polypeptide: Probable cytosol aminopeptidase (497 aa).

The Mn(2+) site is built by Lys264 and Asp269. Lys276 is a catalytic residue. Positions 287, 346, and 348 each coordinate Mn(2+). The active site involves Arg350.

This sequence belongs to the peptidase M17 family. It depends on Mn(2+) as a cofactor.

The protein localises to the cytoplasm. The enzyme catalyses Release of an N-terminal amino acid, Xaa-|-Yaa-, in which Xaa is preferably Leu, but may be other amino acids including Pro although not Arg or Lys, and Yaa may be Pro. Amino acid amides and methyl esters are also readily hydrolyzed, but rates on arylamides are exceedingly low.. It catalyses the reaction Release of an N-terminal amino acid, preferentially leucine, but not glutamic or aspartic acids.. Presumably involved in the processing and regular turnover of intracellular proteins. Catalyzes the removal of unsubstituted N-terminal amino acids from various peptides. The protein is Probable cytosol aminopeptidase of Persephonella marina (strain DSM 14350 / EX-H1).